The chain runs to 130 residues: Profilin-1 (130 aa).

This sequence belongs to the profilin family. In terms of assembly, interacts with actin. Interacts with RHO1 (GTP-bound form).

Its subcellular location is the cytoplasm. It localises to the cytoskeleton. It is found in the cell projection. The protein localises to the phagocytic cup. The protein resides in the cytoplasmic vesicle. Its subcellular location is the phagosome. Its function is as follows. Binds to actin and affects the structure of the cytoskeleton. At high concentrations, profilin prevents the polymerization of actin, whereas it enhances it at low concentrations. By binding to PIP2, it inhibits the formation of IP3 and DG. This Entamoeba histolytica (strain ATCC 30459 / HM-1:IMSS / ABRM) protein is Profilin-1.